A 270-amino-acid polypeptide reads, in one-letter code: MNDINPAFVMPDVQSSRDTRQIPIQRVGVKGVRYPVSLKTPAGVVPSVGTFNLDVHLPAEVKGTHMSRFVALLEEERAPLELASFRVLLDKMLEKLEAEAGRIEVTFPYFISKIAPVSGVESLMDYEVTLTGEIRNGVTRVFLKALVPVTSLCPCSKKISQYGAHNQRSHITMNVELAGELPVEALVRMAEEEASCELWGLLKRPDEKFVTERAYENPKFVEDLVRDIAMRLNADERIVAYVLEAENFESIHNHSAYAVIERDKRLEPTA.

The protein belongs to the GTP cyclohydrolase IV family.

The enzyme catalyses GTP + H2O = 7,8-dihydroneopterin 3'-triphosphate + formate + H(+). The protein operates within cofactor biosynthesis; 7,8-dihydroneopterin triphosphate biosynthesis; 7,8-dihydroneopterin triphosphate from GTP: step 1/1. In terms of biological role, converts GTP to 7,8-dihydroneopterin triphosphate. This is GTP cyclohydrolase FolE2 from Cupriavidus pinatubonensis (strain JMP 134 / LMG 1197) (Cupriavidus necator (strain JMP 134)).